The following is a 156-amino-acid chain: Large ribosomal subunit protein bL17 (156 aa).

The interval arginine 127–lysine 156 is disordered. The span at lysine 136–alanine 146 shows a compositional bias: basic and acidic residues. A compositionally biased stretch (acidic residues) spans glutamate 147 to lysine 156.

It belongs to the bacterial ribosomal protein bL17 family. In terms of assembly, part of the 50S ribosomal subunit. Contacts protein L32.

This Corynebacterium urealyticum (strain ATCC 43042 / DSM 7109) protein is Large ribosomal subunit protein bL17.